We begin with the raw amino-acid sequence, 185 residues long: dTTP/UTP pyrophosphatase (185 aa).

Asp-67 functions as the Proton acceptor in the catalytic mechanism.

This sequence belongs to the Maf family. YhdE subfamily. The cofactor is a divalent metal cation.

Its subcellular location is the cytoplasm. It catalyses the reaction dTTP + H2O = dTMP + diphosphate + H(+). The enzyme catalyses UTP + H2O = UMP + diphosphate + H(+). In terms of biological role, nucleoside triphosphate pyrophosphatase that hydrolyzes dTTP and UTP. May have a dual role in cell division arrest and in preventing the incorporation of modified nucleotides into cellular nucleic acids. In Lacticaseibacillus casei (strain BL23) (Lactobacillus casei), this protein is dTTP/UTP pyrophosphatase.